Reading from the N-terminus, the 889-residue chain is Oxysterol-binding protein-related protein 8 (889 aa).

Methionine 1 is subject to N-acetylmethionine. The tract at residues 1-129 (MEAALADGEP…SLKVQKKNYR (129 aa)) is disordered. Serine 14, serine 65, and serine 68 each carry phosphoserine. Polar residues predominate over residues 62-71 (PSLSPASLHS). Composition is skewed to basic and acidic residues over residues 73–88 (GFER…KDDS), 95–109 (SKSE…EKDS), and 116–129 (TKKE…KNYR). In terms of domain architecture, PH spans 148 to 265 (VIVMADWLKI…WMDALELALK (118 aa)). Residues serine 314, serine 328, and serine 342 each carry the phosphoserine modification. A compositionally biased stretch (basic and acidic residues) spans 321–336 (FKDQDLYSDKSDKEND). The segment at 321–374 (FKDQDLYSDKSDKENDPEHDESDNEVLGKSEESDTDTSERQDDSYIDPEPVEPL) is disordered. Positions 346–363 (VLGKSEESDTDTSERQDD) are enriched in basic and acidic residues. A 1,2-diacyl-sn-glycero-3-phospho-(1D-myo-inositol 4-phosphate)-binding positions include 420–425 (LSRVVL), 482–485 (KPYN), and 514–515 (HH). Residues 420–425 (LSRVVL) and asparagine 485 contribute to the a 1,2-diacyl-sn-glycero-3-phospho-L-serine site. Serine 540 is a binding site for a 1,2-diacyl-sn-glycero-3-phospho-L-serine. Residues lysine 706, glutamate 710, and arginine 714 each contribute to the a 1,2-diacyl-sn-glycero-3-phospho-(1D-myo-inositol 4-phosphate) site. Residues 772–823 (HRTPMVSVPKMKHKPTRQQKKVVKGYSSPEPDIQDSSGSEAQSVKPSTRRKK) are disordered. Positions 781–794 (KMKHKPTRQQKKVV) are enriched in basic residues. Over residues 805 to 817 (QDSSGSEAQSVKP) the composition is skewed to polar residues. Phosphoserine is present on residues serine 807, serine 808, serine 810, and serine 814. Residues 871 to 888 (YFVIFLLILLQVIINFIF) form a helical membrane-spanning segment.

Belongs to the OSBP family. Interacts with SPAG5. Interacts with NUP62. As to expression, widely expressed. Most abundant in liver, spleen, kidney, brain and adipose tissue.

It localises to the endoplasmic reticulum membrane. Its subcellular location is the nucleus membrane. Its function is as follows. Lipid transporter involved in lipid countertransport between the endoplasmic reticulum and the plasma membrane: specifically exchanges phosphatidylserine with phosphatidylinositol 4-phosphate (PI4P), delivering phosphatidylserine to the plasma membrane in exchange for PI4P, which is degraded by the SAC1/SACM1L phosphatase in the endoplasmic reticulum. Binds phosphatidylserine and PI4P in a mutually exclusive manner. Binds oxysterol, 25-hydroxycholesterol and cholesterol. The protein is Oxysterol-binding protein-related protein 8 of Mus musculus (Mouse).